Reading from the N-terminus, the 451-residue chain is Phosphoglucosamine mutase (451 aa).

Residue Ser-102 is the Phosphoserine intermediate of the active site. The Mg(2+) site is built by Ser-102, Asp-242, Asp-244, and Asp-246. Position 102 is a phosphoserine (Ser-102).

Belongs to the phosphohexose mutase family. It depends on Mg(2+) as a cofactor. Post-translationally, activated by phosphorylation.

It catalyses the reaction alpha-D-glucosamine 1-phosphate = D-glucosamine 6-phosphate. Functionally, catalyzes the conversion of glucosamine-6-phosphate to glucosamine-1-phosphate. This Staphylococcus aureus (strain bovine RF122 / ET3-1) protein is Phosphoglucosamine mutase.